The primary structure comprises 384 residues: Acetylornithine aminotransferase (384 aa).

Pyridoxal 5'-phosphate is bound by residues G95–A96 and F122. Residue R125 participates in N(2)-acetyl-L-ornithine binding. Residue D207–Q210 participates in pyridoxal 5'-phosphate binding. The residue at position 236 (K236) is an N6-(pyridoxal phosphate)lysine. Residue S264 coordinates N(2)-acetyl-L-ornithine. T265 serves as a coordination point for pyridoxal 5'-phosphate.

The protein belongs to the class-III pyridoxal-phosphate-dependent aminotransferase family. ArgD subfamily. In terms of assembly, homodimer. It depends on pyridoxal 5'-phosphate as a cofactor.

The protein localises to the cytoplasm. It carries out the reaction N(2)-acetyl-L-ornithine + 2-oxoglutarate = N-acetyl-L-glutamate 5-semialdehyde + L-glutamate. It functions in the pathway amino-acid biosynthesis; L-arginine biosynthesis; N(2)-acetyl-L-ornithine from L-glutamate: step 4/4. The protein is Acetylornithine aminotransferase of Halalkalibacterium halodurans (strain ATCC BAA-125 / DSM 18197 / FERM 7344 / JCM 9153 / C-125) (Bacillus halodurans).